Consider the following 148-residue polypeptide: Probable calcium-binding protein CML14 (148 aa).

3 consecutive EF-hand domains span residues 9 to 44 (DQVS…LGGN), 80 to 115 (PFDR…IGEK), and 116 to 148 (LQPS…MVAK). Ca(2+)-binding residues include aspartate 22, aspartate 24, aspartate 26, lysine 28, and glutamate 33.

Potential calcium sensor. The polypeptide is Probable calcium-binding protein CML14 (CML14) (Arabidopsis thaliana (Mouse-ear cress)).